Reading from the N-terminus, the 308-residue chain is Eugenol synthase 1 (308 aa).

NADP(+)-binding positions include 13 to 16, 35 to 45, arginine 36, 86 to 88, 111 to 113, lysine 133, and 153 to 155; these read TGYI, VRESTVSDPAK, QMQ, SEF, and NCF. The active-site Proton donor/acceptor is the lysine 133.

It belongs to the NmrA-type oxidoreductase family. In terms of tissue distribution, in flowers, mostly expressed in limbs, and, to a lower extent, in tubes.

The catalysed reaction is eugenol + a carboxylate + NADP(+) = a coniferyl ester + NADPH. It catalyses the reaction eugenol + acetate + NADP(+) = (E)-coniferyl acetate + NADPH. It functions in the pathway aromatic compound metabolism; phenylpropanoid biosynthesis. In terms of biological role, involved in the biosynthesis of the floral volatile eugenol. Catalyzes the synthesis of the phenylpropene eugenol from coniferyl acetate. Phenylpropenes are produced by plants as defense compounds with antimicrobial and antianimal properties, or as floral attractants of pollinators. This is Eugenol synthase 1 from Petunia hybrida (Petunia).